The primary structure comprises 120 residues: Large ribosomal subunit protein uL18 (120 aa).

Belongs to the universal ribosomal protein uL18 family. Part of the 50S ribosomal subunit; part of the 5S rRNA/L5/L18/L25 subcomplex. Contacts the 5S and 23S rRNAs.

Functionally, this is one of the proteins that bind and probably mediate the attachment of the 5S RNA into the large ribosomal subunit, where it forms part of the central protuberance. In Rhizobium leguminosarum bv. trifolii (strain WSM2304), this protein is Large ribosomal subunit protein uL18.